The following is a 106-amino-acid chain: Large ribosomal subunit protein eL36 (106 aa).

Positions 75-93 (VRQEKVGHSQESKEEERGD) are enriched in basic and acidic residues. The tract at residues 75–106 (VRQEKVGHSQESKEEERGDVQCSPPDEGWWWY) is disordered.

Belongs to the eukaryotic ribosomal protein eL36 family.

The chain is Large ribosomal subunit protein eL36 (RPL36) from Daucus carota (Wild carrot).